Reading from the N-terminus, the 351-residue chain is CCN family member 3 (351 aa).

An N-terminal signal peptide occupies residues 1-24; sequence METGGGQGLPVLLLLLLLLRPCEV. An IGFBP N-terminal domain is found at 27 to 101; the sequence is REAACPRPCG…GGGAGICMVL (75 aa). 6 disulfides stabilise this stretch: Cys31–Cys57, Cys35–Cys59, Cys39–Cys60, Cys46–Cys63, Cys71–Cys85, and Cys77–Cys98. Residues 104–170 form the VWFC domain; sequence DNCVFDGMIY…GECCEKWVCD (67 aa). A TSP type-1 domain is found at 201-246; that stretch reads NCIEQTTEWSACSKSCGMGFSTRVTNRNQQCEMVKQTRLCMMRPCE. Cystine bridges form between Cys258–Cys295, Cys275–Cys309, Cys286–Cys325, Cys289–Cys327, and Cys294–Cys331. Residues 258–332 enclose the CTCK domain; the sequence is CIQTKKSMKA…NTCVCHGNCP (75 aa). Asn274 carries N-linked (GlcNAc...) asparagine glycosylation.

Belongs to the CCN family. As to expression, brain and heart, and at a lower level in muscle and intestine, in the embryo. Lung and less so in brain and spleen, in adult chicken.

It is found in the secreted. Its subcellular location is the cytoplasm. The protein localises to the cell junction. The protein resides in the gap junction. Immediate-early protein likely to play a role in cell growth regulation. Its overexpression is associated with tumorigenesis and expression of a N-terminal-truncated version of CCN3 gene in chicken embryonic fibroblasts (CEF) is sufficient to induce the transformation of CEF in vitro. This chain is CCN family member 3 (CCN3), found in Gallus gallus (Chicken).